A 202-amino-acid polypeptide reads, in one-letter code: FMN-dependent NADH:quinone oxidoreductase (202 aa).

FMN-binding positions include S10, S16–S18, and M96–F99.

The protein belongs to the azoreductase type 1 family. In terms of assembly, homodimer. Requires FMN as cofactor.

It catalyses the reaction 2 a quinone + NADH + H(+) = 2 a 1,4-benzosemiquinone + NAD(+). The catalysed reaction is N,N-dimethyl-1,4-phenylenediamine + anthranilate + 2 NAD(+) = 2-(4-dimethylaminophenyl)diazenylbenzoate + 2 NADH + 2 H(+). Its function is as follows. Quinone reductase that provides resistance to thiol-specific stress caused by electrophilic quinones. Also exhibits azoreductase activity. Catalyzes the reductive cleavage of the azo bond in aromatic azo compounds to the corresponding amines. The polypeptide is FMN-dependent NADH:quinone oxidoreductase (Beijerinckia indica subsp. indica (strain ATCC 9039 / DSM 1715 / NCIMB 8712)).